We begin with the raw amino-acid sequence, 372 residues long: Queuine tRNA-ribosyltransferase (372 aa).

Asp89 acts as the Proton acceptor in catalysis. Substrate is bound by residues 89–93 (DSGGF), Asp161, and Gly232. An RNA binding region spans residues 262–268 (GIGDLPS). The active-site Nucleophile is the Asp281. Positions 286 to 290 (TKAAR) are RNA binding; important for wobble base 34 recognition. Zn(2+)-binding residues include Cys319, Cys321, Cys324, and His351.

It belongs to the queuine tRNA-ribosyltransferase family. In terms of assembly, homodimer. Within each dimer, one monomer is responsible for RNA recognition and catalysis, while the other monomer binds to the replacement base PreQ1. Requires Zn(2+) as cofactor.

The enzyme catalyses 7-aminomethyl-7-carbaguanine + guanosine(34) in tRNA = 7-aminomethyl-7-carbaguanosine(34) in tRNA + guanine. It participates in tRNA modification; tRNA-queuosine biosynthesis. In terms of biological role, catalyzes the base-exchange of a guanine (G) residue with the queuine precursor 7-aminomethyl-7-deazaguanine (PreQ1) at position 34 (anticodon wobble position) in tRNAs with GU(N) anticodons (tRNA-Asp, -Asn, -His and -Tyr). Catalysis occurs through a double-displacement mechanism. The nucleophile active site attacks the C1' of nucleotide 34 to detach the guanine base from the RNA, forming a covalent enzyme-RNA intermediate. The proton acceptor active site deprotonates the incoming PreQ1, allowing a nucleophilic attack on the C1' of the ribose to form the product. After dissociation, two additional enzymatic reactions on the tRNA convert PreQ1 to queuine (Q), resulting in the hypermodified nucleoside queuosine (7-(((4,5-cis-dihydroxy-2-cyclopenten-1-yl)amino)methyl)-7-deazaguanosine). The polypeptide is Queuine tRNA-ribosyltransferase (Chlamydia trachomatis serovar A (strain ATCC VR-571B / DSM 19440 / HAR-13)).